The sequence spans 119 residues: Small ribosomal subunit protein uS10 (119 aa).

Belongs to the universal ribosomal protein uS10 family. Component of the small ribosomal subunit. Mature ribosomes consist of a small (40S) and a large (60S) subunit. The 40S subunit contains about 32 different proteins and 1 molecule of RNA (18S). The 60S subunit contains 45 different proteins and 3 molecules of RNA (25S, 5.8S and 5S).

Its subcellular location is the cytoplasm. Its function is as follows. Component of the ribosome, a large ribonucleoprotein complex responsible for the synthesis of proteins in the cell. The small ribosomal subunit (SSU) binds messenger RNAs (mRNAs) and translates the encoded message by selecting cognate aminoacyl-transfer RNA (tRNA) molecules. The large subunit (LSU) contains the ribosomal catalytic site termed the peptidyl transferase center (PTC), which catalyzes the formation of peptide bonds, thereby polymerizing the amino acids delivered by tRNAs into a polypeptide chain. The nascent polypeptides leave the ribosome through a tunnel in the LSU and interact with protein factors that function in enzymatic processing, targeting, and the membrane insertion of nascent chains at the exit of the ribosomal tunnel. The protein is Small ribosomal subunit protein uS10 (RPS20) of Candida albicans (strain SC5314 / ATCC MYA-2876) (Yeast).